We begin with the raw amino-acid sequence, 572 residues long: Urease subunit alpha (572 aa).

Positions 136 to 572 (GGIDTHIHWI…VPLAQRYFLF (437 aa)) constitute a Urease domain. Ni(2+) contacts are provided by His141, His143, and Lys224. Residue Lys224 is modified to N6-carboxylysine. His226 is a binding site for substrate. 2 residues coordinate Ni(2+): His253 and His279. His327 (proton donor) is an active-site residue. Residue Asp367 participates in Ni(2+) binding.

This sequence belongs to the metallo-dependent hydrolases superfamily. Urease alpha subunit family. In terms of assembly, heterotrimer of UreA (gamma), UreB (beta) and UreC (alpha) subunits. Three heterotrimers associate to form the active enzyme. The cofactor is Ni cation. Carboxylation allows a single lysine to coordinate two nickel ions.

The protein localises to the cytoplasm. The catalysed reaction is urea + 2 H2O + H(+) = hydrogencarbonate + 2 NH4(+). It functions in the pathway nitrogen metabolism; urea degradation; CO(2) and NH(3) from urea (urease route): step 1/1. This Actinobacillus pleuropneumoniae serotype 3 (strain JL03) protein is Urease subunit alpha.